The sequence spans 142 residues: Galactose-6-phosphate isomerase subunit LacA (142 aa).

It belongs to the LacAB/RpiB family. Heteromultimeric protein consisting of LacA and LacB.

It catalyses the reaction aldehydo-D-galactose 6-phosphate = keto-D-tagatose 6-phosphate. It participates in carbohydrate metabolism; D-galactose 6-phosphate degradation; D-tagatose 6-phosphate from D-galactose 6-phosphate: step 1/1. The protein is Galactose-6-phosphate isomerase subunit LacA of Staphylococcus epidermidis (strain ATCC 35984 / DSM 28319 / BCRC 17069 / CCUG 31568 / BM 3577 / RP62A).